The sequence spans 224 residues: Orotidine 5'-phosphate decarboxylase (224 aa).

Residues D10, K32, 59 to 68 (DLKLHDIPNT), T115, R175, Q184, G204, and R205 each bind substrate. K61 functions as the Proton donor in the catalytic mechanism.

This sequence belongs to the OMP decarboxylase family. Type 1 subfamily. As to quaternary structure, homodimer.

The enzyme catalyses orotidine 5'-phosphate + H(+) = UMP + CO2. It functions in the pathway pyrimidine metabolism; UMP biosynthesis via de novo pathway; UMP from orotate: step 2/2. Functionally, catalyzes the decarboxylation of orotidine 5'-monophosphate (OMP) to uridine 5'-monophosphate (UMP). The protein is Orotidine 5'-phosphate decarboxylase of Erythrobacter litoralis (strain HTCC2594).